Here is a 348-residue protein sequence, read N- to C-terminus: Ferredoxin--NADP reductase (348 aa).

FAD-binding residues include T25, E44, Q52, Y57, V97, F132, D298, and S339.

Belongs to the ferredoxin--NADP reductase type 2 family. As to quaternary structure, homodimer. FAD serves as cofactor.

It catalyses the reaction 2 reduced [2Fe-2S]-[ferredoxin] + NADP(+) + H(+) = 2 oxidized [2Fe-2S]-[ferredoxin] + NADPH. The sequence is that of Ferredoxin--NADP reductase from Chlorobium phaeobacteroides (strain BS1).